The primary structure comprises 194 residues: CASP-like protein Ni6 (194 aa).

Over 1–27 (MSSMETEKGAVPTPQAPPVAPTDNKYR) the chain is Cytoplasmic. A helical membrane pass occupies residues 28–48 (VVDVILRVLLLAASIASVVLM). Topologically, residues 49-75 (VTSKQTEIIVSPFGSRPNAAKFQNSPA) are extracellular. The chain crosses the membrane as a helical span at residues 76–96 (FIYLVAALSVAGLYSIITALV). Topologically, residues 97 to 109 (SLSYMRKPIVPPK) are cytoplasmic. The chain crosses the membrane as a helical span at residues 110–130 (LFWILLIHDVLLLGIVAAATG). The Extracellular portion of the chain corresponds to 131-161 (TAGGVGYIGLKGNTHVRWGKIRNVYDKFCRH). Residues 162–182 (VGASIIVSLFAAAVLVLLVFV) traverse the membrane as a helical segment. The Cytoplasmic segment spans residues 183-194 (NANSLYRRIPKY).

It belongs to the Casparian strip membrane proteins (CASP) family. As to quaternary structure, homodimer and heterodimers.

Its subcellular location is the cell membrane. This is CASP-like protein Ni6 (Ni6) from Beta vulgaris subsp. maritima (Sea beet).